The sequence spans 347 residues: NADH-ubiquinone oxidoreductase chain 2 (347 aa).

Transmembrane regions (helical) follow at residues 3 to 23, 25 to 45, 59 to 79, 96 to 116, 122 to 142, 149 to 169, 178 to 198, 201 to 221, 237 to 257, 274 to 294, and 323 to 343; these read PPIL…VMTS, HWML…PILM, YFLT…INLL, ILMT…FWVP, ISLS…LSVL, INPN…GWGG, IMAY…LYNP, MFLN…LFMI, APLI…LPPL, EMII…YFYM, and MIFL…TPMI.

It belongs to the complex I subunit 2 family. Core subunit of respiratory chain NADH dehydrogenase (Complex I) which is composed of 45 different subunits. Interacts with TMEM242.

Its subcellular location is the mitochondrion inner membrane. It catalyses the reaction a ubiquinone + NADH + 5 H(+)(in) = a ubiquinol + NAD(+) + 4 H(+)(out). Its function is as follows. Core subunit of the mitochondrial membrane respiratory chain NADH dehydrogenase (Complex I) which catalyzes electron transfer from NADH through the respiratory chain, using ubiquinone as an electron acceptor. Essential for the catalytic activity and assembly of complex I. In Civettictis civetta (African civet), this protein is NADH-ubiquinone oxidoreductase chain 2.